The following is a 335-amino-acid chain: Phospholipid scramblase 1 (335 aa).

A proline-rich domain (PRD) region spans residues 1 to 101 (MEKHGPPEHA…NHPGGPGGTP (101 aa)). The disordered stretch occupies residues 1–102 (MEKHGPPEHA…HPGGPGGTPW (102 aa)). The Cytoplasmic portion of the chain corresponds to 1–305 (MEKHGPPEHA…IQFPLDLDVK (305 aa)). Tandem repeats lie at residues 23 to 29 (QGPYPGP), 30 to 36 (QGPYPGP), 37 to 43 (QGPYAGP), 44 to 50 (QGPYPGP), 51 to 57 (QGPYAGP), and 58 to 64 (QGPYPGP). The interval 23–71 (QGPYPGPQGPYPGPQGPYAGPQGPYPGPQGPYAGPQGPYPGPQPGYPVP) is 7 X 7 AA tandem repeats of Q-G-P-Y-[AP]-G-P. The segment covering 26 to 37 (YPGPQGPYPGPQ) has biased composition (pro residues). The segment covering 59-72 (GPYPGPQPGYPVPP) has biased composition (pro residues). Positions 64–72 (PQPGYPVPP) match the SH3-binding 1 motif. The 7; approximate repeat unit spans residues 65–71 (QPGYPVP). Tyr91 bears the Phosphotyrosine; by ABL mark. Residues 101–109 (PWMQAPPPP) carry the SH3-binding 2 motif. Thr178 carries the post-translational modification Phosphothreonine; by PKC/PRKCD. Residues Cys201, Cys202, Cys205, and Cys206 are each lipidated (S-palmitoyl cysteine). Positions 274–283 (GKISKQWSGF) match the Nuclear localization signal motif. A helical membrane pass occupies residues 306–322 (MKAVMLGACFLIDFMFF). The Extracellular portion of the chain corresponds to 323 to 335 (ERTGNEEQRSGVW).

Belongs to the phospholipid scramblase family. As to quaternary structure, forms homooligomers in the presence of calcium. Interacts with ABL. Interacts with RELT, RELL1 and RELL2. Interacts with OXSR1 in the presence of RELT. Interacts with OCLN, TOP2A and TOP2B. Interacts with TRPC1, TRPC4 and TRPC5. Interacts with ILDR1. It depends on Ca(2+) as a cofactor. Mg(2+) serves as cofactor. The cofactor is Zn(2+). Post-translationally, phosphorylated on tyrosine residues. Phosphorylated by OXSR1 in the presence of RELT. Phosphorylation at Thr-178 by PKC/PKCD increases its phospholipid scramblase activity during both cell stimulation and apoptosis. In terms of processing, palmitoylation is required for its phospholipid scramblase activity. Palmitoylation regulates its localization to the cell membrane or the nucleus; trafficking to the cell membrane is dependent upon palmitoylation whereas in the absence of palmitoylation, localizes to the nucleus.

It is found in the cell membrane. It localises to the nucleus. Its subcellular location is the cytoplasm. The protein resides in the perinuclear region. It carries out the reaction a 1,2-diacyl-sn-glycero-3-phosphocholine(in) = a 1,2-diacyl-sn-glycero-3-phosphocholine(out). It catalyses the reaction a 1,2-diacyl-sn-glycero-3-phosphoethanolamine(in) = a 1,2-diacyl-sn-glycero-3-phosphoethanolamine(out). The catalysed reaction is a 1,2-diacyl-sn-glycero-3-phospho-L-serine(in) = a 1,2-diacyl-sn-glycero-3-phospho-L-serine(out). Catalyzes calcium-induced ATP-independent rapid bidirectional and non-specific distribution of phospholipids (lipid scrambling or lipid flip-flop) between the inner and outer leaflet of the plasma membrane resulting in collapse of the phospholipid asymmetry which leads to phosphatidylserine externalization on the cell surface. Mediates calcium-dependent phosphatidylserine externalization and apoptosis in neurons via its association with TRPC5. Also exhibits magnesium-dependent nuclease activity against double-stranded DNA and RNA but not single-stranded DNA and can enhance DNA decatenation mediated by TOP2A. Negatively regulates FcR-mediated phagocytosis in differentiated macrophages. May contribute to cytokine-regulated cell proliferation and differentiation. The protein is Phospholipid scramblase 1 (Plscr1) of Rattus norvegicus (Rat).